We begin with the raw amino-acid sequence, 618 residues long: Kelch-like protein 40b (618 aa).

Residues 33 to 100 (VDCVLKIKDK…LYTSNINVTE (68 aa)) form the BTB domain. The BACK domain occupies 135–237 (CLAIFRLGLM…PRDYFVKNVE (103 aa)). Basic and acidic residues predominate over residues 264-284 (PELKKTKNKKSPSEEGQKKGD). The interval 264-297 (PELKKTKNKKSPSEEGQKKGDEEEVEEEEEQEER) is disordered. The segment covering 285 to 295 (EEEVEEEEEQE) has biased composition (acidic residues). Kelch repeat units follow at residues 356 to 408 (QIFV…EAEN), 409 to 458 (FIFV…SHNE), 459 to 506 (MIYV…IHKN), 508 to 553 (IYVV…SVSG), and 555 to 608 (LYAV…VLGV).

Belongs to the KLHL40 family. In terms of assembly, component of the BCR(KLHL40) E3 ubiquitin ligase complex. In terms of tissue distribution, expressed in skeletal muscle. Detected in the eye at much lower levels.

It localises to the cytoplasm. The protein resides in the myofibril. The protein localises to the sarcomere. It is found in the a band. Its subcellular location is the i band. Functionally, substrate-specific adapter of a BCR (BTB-CUL3-RBX1) E3 ubiquitin ligase complex. Required for skeletal muscle development. The polypeptide is Kelch-like protein 40b (klhl40b) (Danio rerio (Zebrafish)).